A 339-amino-acid polypeptide reads, in one-letter code: Cyclin-Y-like protein 1 (339 aa).

The region spanning 181–263 (QLTAECAIVT…FLELLQFNIN (83 aa)) is the Cyclin N-terminal domain.

This sequence belongs to the cyclin family. Cyclin Y subfamily.

It is found in the cell membrane. In terms of biological role, key regulator of Wnt signaling implicated in various biological processes such as embryonic neurogenesis. The sequence is that of Cyclin-Y-like protein 1 (ccnyl1) from Danio rerio (Zebrafish).